The chain runs to 62 residues: Large ribosomal subunit protein eL37 (62 aa).

Positions 20, 23, 35, and 38 each coordinate Zn(2+). The C4-type zinc finger occupies C20–C38.

It belongs to the eukaryotic ribosomal protein eL37 family. It depends on Zn(2+) as a cofactor.

Its function is as follows. Binds to the 23S rRNA. The protein is Large ribosomal subunit protein eL37 of Desulfurococcus amylolyticus (strain DSM 18924 / JCM 16383 / VKM B-2413 / 1221n) (Desulfurococcus kamchatkensis).